A 170-amino-acid polypeptide reads, in one-letter code: Extracellular globin-3 (170 aa).

Positions 1-17 (MLRQLLVLVGLAVVCLA) are cleaved as a signal peptide. The Globin domain occupies 23–169 (CCSEEDHRIV…ILTKISSRLN (147 aa)). Residues Cys24 and Cys156 are joined by a disulfide bond. His119 provides a ligand contact to heme b.

The protein belongs to the globin family. The extracellular hemoglobin of the earthworm consists of 12 subunits that have a hexagonal bilayer structure with a molecular weight near 3.8 million. Each one-twelfth subunit is composed primarily of disulfide linked trimers (chains A, B, and C) and monomers (chain D).

The protein resides in the secreted. The sequence is that of Extracellular globin-3 from Lumbricus terrestris (Common earthworm).